The primary structure comprises 238 residues: Endonuclease III homolog (238 aa).

A HhH domain is found at 129–155; it reads REKGLPREMKDLISLPGIGNKMALLYM. The active-site Nucleophile; for N-glycosylase activity is the K149. 4 residues coordinate [4Fe-4S] cluster: C217, C224, C227, and C233.

The protein belongs to the Nth/MutY family. [4Fe-4S] cluster is required as a cofactor.

The protein resides in the nucleus. Its subcellular location is the mitochondrion. The enzyme catalyses 2'-deoxyribonucleotide-(2'-deoxyribose 5'-phosphate)-2'-deoxyribonucleotide-DNA = a 3'-end 2'-deoxyribonucleotide-(2,3-dehydro-2,3-deoxyribose 5'-phosphate)-DNA + a 5'-end 5'-phospho-2'-deoxyribonucleoside-DNA + H(+). In terms of biological role, bifunctional DNA N-glycosylase with associated apurinic/apyrimidinic (AP) lyase function that catalyzes the first step in base excision repair (BER), the primary repair pathway for the repair of oxidative DNA damage. The DNA N-glycosylase activity releases the damaged DNA base from DNA by cleaving the N-glycosidic bond, leaving an AP site. The AP lyase activity cleaves the phosphodiester bond 3' to the AP site by a beta-elimination. Primarily recognizes and repairs oxidative base damage of pyrimidines. This chain is Endonuclease III homolog, found in Encephalitozoon cuniculi (strain GB-M1) (Microsporidian parasite).